A 317-amino-acid polypeptide reads, in one-letter code: Beta-ketoacyl-[acyl-carrier-protein] synthase III (317 aa).

Catalysis depends on residues Cys-112 and His-244. Residues 245–249 (QANLR) form an ACP-binding region. The active site involves Asn-274.

This sequence belongs to the thiolase-like superfamily. FabH family. As to quaternary structure, homodimer.

The protein resides in the cytoplasm. It carries out the reaction malonyl-[ACP] + acetyl-CoA + H(+) = 3-oxobutanoyl-[ACP] + CO2 + CoA. It participates in lipid metabolism; fatty acid biosynthesis. Catalyzes the condensation reaction of fatty acid synthesis by the addition to an acyl acceptor of two carbons from malonyl-ACP. Catalyzes the first condensation reaction which initiates fatty acid synthesis and may therefore play a role in governing the total rate of fatty acid production. Possesses both acetoacetyl-ACP synthase and acetyl transacylase activities. Its substrate specificity determines the biosynthesis of branched-chain and/or straight-chain of fatty acids. The sequence is that of Beta-ketoacyl-[acyl-carrier-protein] synthase III from Shigella dysenteriae serotype 1 (strain Sd197).